Reading from the N-terminus, the 207-residue chain is Protein lin-7 homolog B (207 aa).

The Kinase interacting site signature appears at 1-13; that stretch reads MAALVEPLGLERD. The 56-residue stretch at 10–65 folds into the L27 domain; the sequence is LERDVSRAVELLERLQRSGELPPQKLQALQRVLQSRFCSAIREVYEQLYDTLDITG. In terms of domain architecture, PDZ spans 93-175; it reads VVELPKTDEG…SVKLVVRYTP (83 aa). Positions 187-207 are disordered; the sequence is KMRSARRRQQHQSYSSLESRG. Positions 197–207 are enriched in polar residues; that stretch reads HQSYSSLESRG.

This sequence belongs to the lin-7 family. In terms of assembly, forms a complex with CASK and CASKIN1. Component of the brain-specific heterotrimeric complex (LIN-10-LIN-2-LIN-7 complex) composed of at least APBA1, CASK, and LIN7, which associates with the motor protein KIF17 to transport vesicles along microtubules. Forms a heterotrimeric complex composed of MMP5, LIN7B and PATJ; the N-terminal L27 domain of PALS1 interacts with the L27 domain of PATJ and the C-terminal L27 domain of PALS1 interacts with the L27 domain of LIN7B. Forms a heterotrimeric complex with DLG1 and CASK via their L27 domains. Interacts with DLG4 and GRIN2B as well as CDH1 and CTNNB1, the channels KCNJ12/Kir2.2, KCNJ4/Kir2.3 and probably KCNJ2/Kir2.1 and SLC6A12/BGT-1 via its PDZ domain. The association of LIN7A with cadherin and beta-catenin is calcium-dependent, occurs at synaptic junctions and requires the actin cytoskeleton. Interacts with EGFR, ERBB2, ERBB3 and ERBB4 with both PDZ and KID domains. Associates with KIF17 via APBA1. Interacts with ASIC3. Interacts with TOPK. Interacts with RTKN. Interacts with APBA1. Interacts with MPP7. Interacts with DLG2. Interacts with DLG3.

The protein localises to the cell membrane. It is found in the basolateral cell membrane. It localises to the cell junction. The protein resides in the postsynaptic density membrane. Its subcellular location is the tight junction. Its function is as follows. Plays a role in establishing and maintaining the asymmetric distribution of channels and receptors at the plasma membrane of polarized cells. Forms membrane-associated multiprotein complexes that may regulate delivery and recycling of proteins to the correct membrane domains. The tripartite complex composed of LIN7 (LIN7A, LIN7B or LIN7C), CASK and APBA1 associates with the motor protein KIF17 to transport vesicles containing N-methyl-D-aspartate (NMDA) receptor subunit NR2B along microtubules. This complex may have the potential to couple synaptic vesicle exocytosis to cell adhesion in brain. Ensures the proper localization of GRIN2B (subunit 2B of the NMDA receptor) to neuronal postsynaptic density and may function in localizing synaptic vesicles at synapses where it is recruited by beta-catenin and cadherin. Required to localize Kir2 channels, GABA transporter (SLC6A12) and EGFR/ERBB1, ERBB2, ERBB3 and ERBB4 to the basolateral membrane of epithelial cells. May increase the amplitude of ASIC3 acid-evoked currents by stabilizing the channel at the cell surface. The protein is Protein lin-7 homolog B (LIN7B) of Homo sapiens (Human).